The primary structure comprises 102 residues: Thioredoxin (102 aa).

The region spanning 1–102 (MVKIISSENF…FLTNLINKHA (102 aa)) is the Thioredoxin domain. A disulfide bond links cysteine 28 and cysteine 31.

The protein belongs to the thioredoxin family.

In terms of biological role, participates in various redox reactions through the reversible oxidation of its active center dithiol to a disulfide and catalyzes dithiol-disulfide exchange reactions. This Chlamydia pneumoniae (Chlamydophila pneumoniae) protein is Thioredoxin (trxA).